Here is a 164-residue protein sequence, read N- to C-terminus: Large ribosomal subunit protein bL21 (164 aa).

The interval 105–164 (KAPTIGPRAKKEKKVEAAPADGEAPAKKAPAKKAAAKKAAPKAAAKKAPAKKAAPKAKSE) is disordered. Basic residues predominate over residues 133–164 (APAKKAAAKKAAPKAAAKKAPAKKAAPKAKSE).

The protein belongs to the bacterial ribosomal protein bL21 family. In terms of assembly, part of the 50S ribosomal subunit. Contacts protein L20.

Functionally, this protein binds to 23S rRNA in the presence of protein L20. The sequence is that of Large ribosomal subunit protein bL21 from Afipia carboxidovorans (strain ATCC 49405 / DSM 1227 / KCTC 32145 / OM5) (Oligotropha carboxidovorans).